A 126-amino-acid polypeptide reads, in one-letter code: Large ribosomal subunit protein bL12 (126 aa).

Belongs to the bacterial ribosomal protein bL12 family. Homodimer. Part of the ribosomal stalk of the 50S ribosomal subunit. Forms a multimeric L10(L12)X complex, where L10 forms an elongated spine to which 2 to 4 L12 dimers bind in a sequential fashion. Binds GTP-bound translation factors.

Its function is as follows. Forms part of the ribosomal stalk which helps the ribosome interact with GTP-bound translation factors. Is thus essential for accurate translation. In Nocardia farcinica (strain IFM 10152), this protein is Large ribosomal subunit protein bL12.